An 826-amino-acid polypeptide reads, in one-letter code: Outer membrane usher protein YehB (826 aa).

An N-terminal signal peptide occupies residues 1–22 (MLRMTPLASAIVALLLGIEAYA). A disulfide bond links Cys-809 and Cys-825.

This sequence belongs to the fimbrial export usher family.

Its subcellular location is the cell outer membrane. Part of the yehABCD fimbrial operon. Could contribute to adhesion to various surfaces in specific environmental niches. Probably involved in the export and assembly of fimbrial subunits across the outer membrane. In Escherichia coli (strain K12), this protein is Outer membrane usher protein YehB (yehB).